Reading from the N-terminus, the 875-residue chain is Peptidyl-glycine alpha-amidating monooxygenase B (875 aa).

The N-terminal stretch at 1-39 (MDMASLISSLLVLFLIFQNSCYCFRSPLSVFKRYEESTR) is a signal peptide. Residues 3 to 394 (MASLISSLLV…KREEEEVLNQ (392 aa)) form a peptidylglycine alpha-hydroxylating monooxygenase region. Over 40–763 (SLSNDCLGTT…PSVVQESSAG (724 aa)) the chain is Intragranular. Cystine bridges form between Cys-45–Cys-184, Cys-79–Cys-124, Cys-112–Cys-129, Cys-225–Cys-332, and Cys-291–Cys-313. His-105 and His-106 together coordinate Cu(2+). Cu(2+) is bound by residues His-170, His-240, His-242, and Met-312. The segment at 395-716 (DVHLEEDTDW…SPSKAEHRSV (322 aa)) is peptidyl-alpha-hydroxyglycine alpha-amidating lyase. Arg-430 lines the a protein pocket. N-linked (GlcNAc...) asparagine glycosylation is present at Asn-465. 3 NHL repeats span residues 467 to 508 (SKVL…VGAE), 516 to 561 (LGRA…FSPN), and 569 to 613 (GEET…FHAK). 2 disulfides stabilise this stretch: Cys-530–Cys-551 and Cys-598–Cys-609. Positions 550 and 602 each coordinate a protein. Asn-662 is a glycosylation site (N-linked (GlcNAc...) asparagine). The NHL 4 repeat unit spans residues 666-709 (GDILDTFIPARKNFEMPHDIAAGDDGTVYVGDAHANAVWKFSPS). Residues 735-755 (HMRSRPKTNESVGQQTQEKPS) are disordered. N-linked (GlcNAc...) asparagine glycosylation is present at Asn-743. Positions 743 to 755 (NESVGQQTQEKPS) are enriched in polar residues. Residues 764–787 (VSFVLIITLLIIPVVVLIAIAIFI) form a helical membrane-spanning segment. Residues 788-875 (RWRKVRMYGG…APPIPPVSSS (88 aa)) are Cytoplasmic-facing. The interval 837–875 (KGFDRLSTEGSDQEKDDDDDGSDSEEEYSAPPIPPVSSS) is disordered. A compositionally biased stretch (acidic residues) spans 850–864 (EKDDDDDGSDSEEEY).

This sequence in the C-terminal section; belongs to the peptidyl-alpha-hydroxyglycine alpha-amidating lyase family. It in the N-terminal section; belongs to the copper type II ascorbate-dependent monooxygenase family. Monomer. The cofactor is Zn(2+). Cu(2+) is required as a cofactor.

The protein localises to the cytoplasmic vesicle. It localises to the secretory vesicle membrane. It catalyses the reaction a [peptide]-C-terminal glycine + 2 L-ascorbate + O2 = a [peptide]-C-terminal (2S)-2-hydroxyglycine + 2 monodehydro-L-ascorbate radical + H2O. The enzyme catalyses a [peptide]-C-terminal (2S)-2-hydroxyglycine = a [peptide]-C-terminal amide + glyoxylate. Bifunctional enzyme that catalyzes amidation of the C-terminus of proteins. Alpha-amidation is present at the C-terminus of many endocrine hormones and neuropeptides and is required for their activity. C-terminal amidation also takes place in response to protein fragmentation triggered by oxidative stress, promoting degradation of amidated protein fragments by the proteasome. Alpha-amidation involves two sequential reactions, both of which are catalyzed by separate catalytic domains of the enzyme. The first step, catalyzed by peptidyl alpha-hydroxylating monooxygenase (PHM) domain, is the copper-, ascorbate-, and O2- dependent stereospecific hydroxylation (with S stereochemistry) at the alpha-carbon (C-alpha) of the C-terminal glycine of the peptidylglycine substrate. The second step, catalyzed by the peptidylglycine amidoglycolate lyase (PAL) domain, is the zinc-dependent cleavage of the N-C-alpha bond, producing the alpha-amidated peptide and glyoxylate. The sequence is that of Peptidyl-glycine alpha-amidating monooxygenase B (pam-b) from Xenopus laevis (African clawed frog).